Here is a 771-residue protein sequence, read N- to C-terminus: Myotubularin-related protein 10 (771 aa).

The Myotubularin phosphatase domain maps to 217-657 (FETYSDWDRE…THIKLWKLCY (441 aa)). A phosphoserine mark is found at Ser603 and Ser745.

Belongs to the protein-tyrosine phosphatase family. Non-receptor class myotubularin subfamily.

This is Myotubularin-related protein 10 (Mtmr10) from Mus musculus (Mouse).